We begin with the raw amino-acid sequence, 78 residues long: Large ribosomal subunit protein bL28 (78 aa).

It belongs to the bacterial ribosomal protein bL28 family.

In Clavibacter michiganensis subsp. michiganensis (strain NCPPB 382), this protein is Large ribosomal subunit protein bL28.